We begin with the raw amino-acid sequence, 421 residues long: MRIAMISMHTSPLEQPGSGDAGGMNVYVLNTARQLARLGVEVDIFTRATRPSQGEVVDVEERLRVINIVAGPYEGLSKEELPTQLAAFTGGIFNFARCFEVDYDVIHSHYWLSGQVGWLLRDLWDIPLVHTAHTLAAVKNVHRTLDDTPETEARRICEQQLVDNADILVVNTAQETRDLIEHYDASPDNIVVVSPGADTDLYTPGTDRMTERARRQLGIPLHTKVVAFVGRLQKFKGPDVLIRATAELMERDPDRRLRVVICGGASGANSSPDTYHNLARELGVERVVRFLSPRPPQELVAIYQAADIVAVPSYNESFGLVAMEAQASGTPVVAAAVGGLPIAVADGDTGLLVHSHSAQDWADALEQLLDDDPRRISMGEAAVDHAQQFSWAAAATQLENIYADAMSIEIPDCHARRAIGY.

His9 is a 1D-myo-inositol 3-phosphate binding site. UDP-N-acetyl-alpha-D-glucosamine-binding positions include 15 to 16 and Gly23; that span reads QP. 1D-myo-inositol 3-phosphate contacts are provided by residues 20–25, Lys78, Tyr110, Thr134, and Arg154; that span reads DAGGMN. The UDP-N-acetyl-alpha-D-glucosamine site is built by Arg231, Lys236, and Arg294. Positions 303, 304, and 306 each coordinate Mg(2+). UDP-N-acetyl-alpha-D-glucosamine is bound by residues Glu316 and Glu324. Thr330 lines the Mg(2+) pocket.

Belongs to the glycosyltransferase group 1 family. MshA subfamily. Homodimer.

It carries out the reaction 1D-myo-inositol 3-phosphate + UDP-N-acetyl-alpha-D-glucosamine = 1D-myo-inositol 2-acetamido-2-deoxy-alpha-D-glucopyranoside 3-phosphate + UDP + H(+). Its function is as follows. Catalyzes the transfer of a N-acetyl-glucosamine moiety to 1D-myo-inositol 3-phosphate to produce 1D-myo-inositol 2-acetamido-2-deoxy-glucopyranoside 3-phosphate in the mycothiol biosynthesis pathway. The protein is D-inositol 3-phosphate glycosyltransferase of Corynebacterium aurimucosum (strain ATCC 700975 / DSM 44827 / CIP 107346 / CN-1) (Corynebacterium nigricans).